We begin with the raw amino-acid sequence, 232 residues long: Phosphatidylserine decarboxylase proenzyme (232 aa).

S190 (schiff-base intermediate with substrate; via pyruvic acid) is an active-site residue. S190 carries the pyruvic acid (Ser); by autocatalysis modification.

This sequence belongs to the phosphatidylserine decarboxylase family. PSD-A subfamily. In terms of assembly, heterodimer of a large membrane-associated beta subunit and a small pyruvoyl-containing alpha subunit. It depends on pyruvate as a cofactor. In terms of processing, is synthesized initially as an inactive proenzyme. Formation of the active enzyme involves a self-maturation process in which the active site pyruvoyl group is generated from an internal serine residue via an autocatalytic post-translational modification. Two non-identical subunits are generated from the proenzyme in this reaction, and the pyruvate is formed at the N-terminus of the alpha chain, which is derived from the carboxyl end of the proenzyme. The post-translation cleavage follows an unusual pathway, termed non-hydrolytic serinolysis, in which the side chain hydroxyl group of the serine supplies its oxygen atom to form the C-terminus of the beta chain, while the remainder of the serine residue undergoes an oxidative deamination to produce ammonia and the pyruvoyl prosthetic group on the alpha chain.

The protein resides in the cell membrane. It catalyses the reaction a 1,2-diacyl-sn-glycero-3-phospho-L-serine + H(+) = a 1,2-diacyl-sn-glycero-3-phosphoethanolamine + CO2. The protein operates within phospholipid metabolism; phosphatidylethanolamine biosynthesis; phosphatidylethanolamine from CDP-diacylglycerol: step 2/2. Catalyzes the formation of phosphatidylethanolamine (PtdEtn) from phosphatidylserine (PtdSer). The chain is Phosphatidylserine decarboxylase proenzyme from Brucella abortus (strain S19).